The chain runs to 433 residues: E1B 55 kDa protein (433 aa).

The protein belongs to the adenoviridae E1B 55 kDa protein family. Interacts with host PML-4 and PML-5; this interaction promotes efficient subnuclear targeting of E1B-55K to PML nuclear bodies. Interacts with E4-ORF3 protein. Interacts with E4-ORF6 protein.

The protein localises to the host nucleus. Its subcellular location is the host cytoplasm. In terms of biological role, plays a major role to prevent cellular inhibition of viral genome replication. Assembles an SCF-like E3 ubiquitin ligase complex based on the cellular proteins ELOB, ELOC, CUL5 and RBX1, in cooperation with viral E4orf6. This viral RING-type ligase ubiquitinates cellular substrates and targets them to proteasomal degradation: TP53/p53, LIG4, MRE11-RAD50-NBS1 (MRN) complex, ITGA3, DAXX and BLM. E1B-55K probably acts as the substrate-specific adapter of the SCF-like E3 ubiquitin ligase complex. Degradation of host TP53/p53 activity is essential for preventing E1A-induced TP53 accumulation that would otherwise lead to cell apoptosis and growth arrest. E1B-55K also inactivates TP53 transcription-factor activity by binding its transactivation domain. E1B-55K also functions as a SUMO1 E3 ligase for TP53 which causes the latter to be sequestered in promyelocytic leukemia (PML) nuclear bodies thereby contributing to maximal inhibition of TP53 function. This Murine adenovirus A serotype 1 (MAdV-1) protein is E1B 55 kDa protein.